Reading from the N-terminus, the 603-residue chain is MSRGSRLHRWPLLLLLLLLLPPPPVLPAEARTPAPVNPCCYYPCQHQGICVRFGLDRYQCDCTRTGYSGPNCTIPELWTWLRNSLRPSPSFLHFLLTHGRWFWEFINATFIRDMLMRLVLTARSNLIPSPPTYNIAHDYISWESFSNVSYYTRVLPSVPQDCPTPMGTKGKKQLPDAQLLGRRFLLRRKFIPDPQGTNLMFAFFAQHFTHQFFKTSGKMGPGFTKALGHGVDLGHIYGDNLDRQYQLRLFKDGKLKYQVLDGEMYPPSVEEAPVLMHYPRGILPQSQMAVGQEVFGLLPGLMLYATLWLREHNRVCDLLKAEHPTWGDEQLFQTARLILIGETIKIVIEEYVQQLSGYFLQLKFDPELLFSAQFQYRNRIAMEFNQLYHWHPLMPDSFWVGSQEYSYEQFLFNTSMLTHYGIEALVDAFSRQSAGRIGGGRNIDHHVLHVAVETIKESRELRLQPFNEYRKRFGMRPYMSFQELTGEKEMAAELEELYGDIDALEFYPGLLLEKCHPNSIFGESMIEIGAPFSLKGLLGNPICSPEYWKPSTFGGEMGFNMVKTATLKKLVCLNTKTCPYVSFRVPDPHQDGGPGVERPSTEL.

The signal sequence occupies residues 1 to 27 (MSRGSRLHRWPLLLLLLLLLPPPPVLP). In terms of domain architecture, EGF-like spans 35 to 73 (PVNPCCYYPCQHQGICVRFGLDRYQCDCTRTGYSGPNCT). 4 cysteine pairs are disulfide-bonded: Cys-39–Cys-50, Cys-40–Cys-162, Cys-44–Cys-60, and Cys-62–Cys-72. N-linked (GlcNAc...) asparagine glycosylation is found at Asn-71, Asn-107, and Asn-147. The active-site Proton acceptor is His-210. Tyr-388 acts as the For cyclooxygenase activity in catalysis. His-391 serves as a coordination point for heme b. The cysteines at positions 572 and 578 are disulfide-linked.

It belongs to the prostaglandin G/H synthase family. Homodimer. Heme b serves as cofactor. Post-translationally, N-glycosylated. N-linked glycosylation is necessary for enzymatic activity. As to expression, brain cortex. Isoform 2 is expressed in the cerebral cortex and heart.

The protein resides in the microsome membrane. It localises to the endoplasmic reticulum membrane. It catalyses the reaction (5Z,8Z,11Z,14Z)-eicosatetraenoate + AH2 + 2 O2 = prostaglandin H2 + A + H2O. The catalysed reaction is (5Z,8Z,11Z,14Z)-eicosatetraenoate + 2 O2 = prostaglandin G2. It carries out the reaction prostaglandin G2 + AH2 = prostaglandin H2 + A + H2O. The enzyme catalyses (9Z,12Z)-octadecadienoate + AH2 + O2 = (9R)-hydroxy-(10E,12Z)-octadecadienoate + A + H2O. It catalyses the reaction (9Z,12Z)-octadecadienoate + AH2 + O2 = (9S)-hydroxy-(10E,12Z)-octadecadienoate + A + H2O. The catalysed reaction is (9Z,12Z)-octadecadienoate + AH2 + O2 = (13S)-hydroxy-(9Z,11E)-octadecadienoate + A + H2O. It carries out the reaction (9Z,12Z)-octadecadienoate + AH2 + O2 = (13R)-hydroxy-(9Z,11E)-octadecadienoate + A + H2O. It functions in the pathway lipid metabolism; prostaglandin biosynthesis. Its activity is regulated as follows. The cyclooxygenase activity is inhibited by nonsteroidal anti-inflammatory drugs (NSAIDs) including ibuprofen, flurbiprofen, ketoprofen, naproxen, flurbiprofen, anirolac, fenclofenac and diclofenac. Its function is as follows. Dual cyclooxygenase and peroxidase that plays an important role in the biosynthesis pathway of prostanoids, a class of C20 oxylipins mainly derived from arachidonate ((5Z,8Z,11Z,14Z)-eicosatetraenoate, AA, C20:4(n-6)), with a particular role in the inflammatory response. The cyclooxygenase activity oxygenates AA to the hydroperoxy endoperoxide prostaglandin G2 (PGG2), and the peroxidase activity reduces PGG2 to the hydroxy endoperoxide prostaglandin H2 (PGH2), the precursor of all 2-series prostaglandins and thromboxanes. This complex transformation is initiated by abstraction of hydrogen at carbon 13 (with S-stereochemistry), followed by insertion of molecular O2 to form the endoperoxide bridge between carbon 9 and 11 that defines prostaglandins. The insertion of a second molecule of O2 (bis-oxygenase activity) yields a hydroperoxy group in PGG2 that is then reduced to PGH2 by two electrons. Involved in the constitutive production of prostanoids in particular in the stomach and platelets. In gastric epithelial cells, it is a key step in the generation of prostaglandins, such as prostaglandin E2 (PGE2), which plays an important role in cytoprotection. In platelets, it is involved in the generation of thromboxane A2 (TXA2), which promotes platelet activation and aggregation, vasoconstriction and proliferation of vascular smooth muscle cells. Can also use linoleate (LA, (9Z,12Z)-octadecadienoate, C18:2(n-6)) as substrate and produce hydroxyoctadecadienoates (HODEs) in a regio- and stereospecific manner, being (9R)-HODE ((9R)-hydroxy-(10E,12Z)-octadecadienoate) and (13S)-HODE ((13S)-hydroxy-(9Z,11E)-octadecadienoate) its major products. This chain is Prostaglandin G/H synthase 1 (PTGS1), found in Canis lupus familiaris (Dog).